A 428-amino-acid chain; its full sequence is MKTSLFKSLYFQVLTAIAIGILLGHYYPELGAQMKPLGDAFVKLIKMIIAPVIFCTVVTGIAGMESMKAVGRTGAVALLYFEIVSTIALINGLIIVNVVQPGAGMNVDPATLDAQAVAVYAAQAKEQGIIAFLMDVIPGSVIGAFASGNILQVLLFAVLFGFALHRLGSKGQLIFNVIESFSQVIFGIINMIMRLAPIGAFGAMAFTIGKYGVGSLVQLGQLIICFYITCILFVVVVLGTIARVTGFSIFKFIRYIREELLIVLGTSSSESALPRMLDKMEKLGCRKSVVGLVIPTGYSFNLDGTSIYLTMAAVFIAQATNSHMDIFHQITLLVVLLLSSKGAAGVTGSGFIVLAATISAVGHLPVAGLALILGIDRFMSEARALTNLVGNGVATVVVAKWVKELDHQKLDDVLNNRAPDGKTHEISS.

Helical transmembrane passes span 5 to 27 (LFKSLYFQVLTAIAIGILLGHYY), 47 to 64 (MIIAPVIFCTVVTGIAGM), 77 to 99 (ALLYFEIVSTIALINGLIIVNVV), 141 to 163 (VIGAFASGNILQVLLFAVLFGFA), 184 to 206 (VIFGIINMIMRLAPIGAFGAMAF), 216 to 238 (LVQLGQLIICFYITCILFVVVVL), 289 to 311 (VVGLVIPTGYSFNLDGTSIYLTM), 326 to 348 (IFHQITLLVVLLLSSKGAAGVTG), and 353 to 375 (VLAATISAVGHLPVAGLALILGI).

The protein belongs to the dicarboxylate/amino acid:cation symporter (DAACS) (TC 2.A.23) family.

It is found in the cell inner membrane. In terms of biological role, responsible for the transport of dicarboxylates such as succinate, fumarate, and malate from the periplasm across the membrane. The polypeptide is Aerobic C4-dicarboxylate transport protein (Salmonella typhi).